The sequence spans 1173 residues: WASH complex subunit 4 (1173 aa).

N-acetylalanine is present on alanine 2. A Phosphoserine modification is found at serine 7. Residues 705 to 1173 (KDLALFFSLN…STVSADPVVK (469 aa)) are sufficient for interaction with WASHC5. Residues 1135–1161 (RADKTAAEENQEKKEKEEETKTSNGDL) are a coiled coil. The span at 1142-1155 (EENQEKKEKEEETK) shows a compositional bias: basic and acidic residues. The tract at residues 1142–1173 (EENQEKKEKEEETKTSNGDLSDSTVSADPVVK) is disordered. At threonine 1154 the chain carries Phosphothreonine. Residues 1157-1167 (SNGDLSDSTVS) show a composition bias toward polar residues.

The protein belongs to the SWIP family. Component of the WASH core complex also described as WASH regulatory complex (SHRC) composed of WASH (WASHC1, WASH2P or WASH3P), WASHC2 (WASHC2A or WASHC2C), WASHC3, WASHC4 and WASHC5. The WASH core complex associates via WASHC2 with the F-actin-capping protein dimer (formed by CAPZA1, CAPZA2 or CAPZA3 and CAPZB) in a transient or substoichiometric manner which was initially described as WASH complex.

The protein localises to the early endosome. In terms of biological role, acts as a component of the WASH core complex that functions as a nucleation-promoting factor (NPF) at the surface of endosomes, where it recruits and activates the Arp2/3 complex to induce actin polymerization, playing a key role in the fission of tubules that serve as transport intermediates during endosome sorting. This Homo sapiens (Human) protein is WASH complex subunit 4.